Consider the following 168-residue polypeptide: Small ribosomal subunit protein uS5 (168 aa).

An S5 DRBM domain is found at 11–74; it reads YSEKVVKIDR…EAAKKHLVKI (64 aa).

Belongs to the universal ribosomal protein uS5 family. In terms of assembly, part of the 30S ribosomal subunit. Contacts proteins S4 and S8.

Its function is as follows. With S4 and S12 plays an important role in translational accuracy. In terms of biological role, located at the back of the 30S subunit body where it stabilizes the conformation of the head with respect to the body. The sequence is that of Small ribosomal subunit protein uS5 from Leptospira borgpetersenii serovar Hardjo-bovis (strain JB197).